The sequence spans 841 residues: Protein NLP6 (841 aa).

Positions 539 to 624 (EAKTVKKSER…IDSVQGADGS (86 aa)) constitute an RWP-RK domain. Residues 649–682 (NCPPTSTSPLSNLQDVKIENRDAEDSAGSSTSRA) form a disordered region. A compositionally biased stretch (polar residues) spans 651-662 (PPTSTSPLSNLQ). A PB1 domain is found at 741-823 (LVSIKATYRE…NTLRLSVHDV (83 aa)).

The protein resides in the nucleus. Probable transcription factor. The polypeptide is Protein NLP6 (NLP6) (Arabidopsis thaliana (Mouse-ear cress)).